Reading from the N-terminus, the 410-residue chain is Cysteine desulfurase IscS (410 aa).

Pyridoxal 5'-phosphate contacts are provided by residues 80 to 81 (AT), Asn-160, Gln-188, and 208 to 210 (SGH). Position 211 is an N6-(pyridoxal phosphate)lysine (Lys-211). Thr-248 contributes to the pyridoxal 5'-phosphate binding site. Cys-334 serves as the catalytic Cysteine persulfide intermediate. [2Fe-2S] cluster is bound at residue Cys-334.

It belongs to the class-V pyridoxal-phosphate-dependent aminotransferase family. NifS/IscS subfamily. Homodimer. Forms a heterotetramer with IscU, interacts with other sulfur acceptors. Pyridoxal 5'-phosphate serves as cofactor.

The protein resides in the cytoplasm. It carries out the reaction (sulfur carrier)-H + L-cysteine = (sulfur carrier)-SH + L-alanine. Its pathway is cofactor biosynthesis; iron-sulfur cluster biosynthesis. Functionally, master enzyme that delivers sulfur to a number of partners involved in Fe-S cluster assembly, tRNA modification or cofactor biosynthesis. Catalyzes the removal of elemental sulfur atoms from cysteine to produce alanine. Functions as a sulfur delivery protein for Fe-S cluster synthesis onto IscU, an Fe-S scaffold assembly protein, as well as other S acceptor proteins. This Rickettsia rickettsii (strain Iowa) protein is Cysteine desulfurase IscS.